The primary structure comprises 118 residues: Basic phospholipase A2 2 (118 aa).

7 cysteine pairs are disulfide-bonded: cysteine 11/cysteine 71, cysteine 27/cysteine 117, cysteine 29/cysteine 45, cysteine 44/cysteine 98, cysteine 51/cysteine 91, cysteine 60/cysteine 84, and cysteine 78/cysteine 89. Ca(2+) contacts are provided by tyrosine 28, glycine 30, and glycine 32. Histidine 48 is a catalytic residue. Aspartate 49 serves as a coordination point for Ca(2+). Aspartate 92 is a catalytic residue.

It belongs to the phospholipase A2 family. Group I subfamily. D49 sub-subfamily. Requires Ca(2+) as cofactor. As to expression, expressed by the venom gland.

The protein resides in the secreted. It carries out the reaction a 1,2-diacyl-sn-glycero-3-phosphocholine + H2O = a 1-acyl-sn-glycero-3-phosphocholine + a fatty acid + H(+). Functionally, snake venom phospholipase A2 (PLA2) that inhibits neuromuscular transmission by blocking acetylcholine release from the nerve termini. PLA2 catalyzes the calcium-dependent hydrolysis of the 2-acyl groups in 3-sn-phosphoglycerides. This chain is Basic phospholipase A2 2, found in Laticauda colubrina (Yellow-lipped sea krait).